A 60-amino-acid polypeptide reads, in one-letter code: UPF0434 protein CKO_02153 (60 aa).

Belongs to the UPF0434 family.

The polypeptide is UPF0434 protein CKO_02153 (Citrobacter koseri (strain ATCC BAA-895 / CDC 4225-83 / SGSC4696)).